A 423-amino-acid chain; its full sequence is MSMALIVRPFFVPGSAGISGSRNICKKNQWRKYLLKPSGSSINCSFSTEKNPLLPSIQQLADARLIYSVSAALGHNKESHPECSARVPAIVNALEMNELTPKFRGSQILELANFKTATVEDIANVHDKAYVFGLEKAMDEASDSGLIFIEGSGPTYATSTTFQDSLIAAGAGMALVDSVIAASRNSVDPPIGFALIRPPGHHAVPKGPMGFCVFGNVAIAARHAQRTHGLKRIFIIDFDVHHGNGTNDAFTEDPDIFFLSTHQDGSYPGTGKISDIGKGKGEGTTLNLPLPGGSGDIAMRTVFEEIIVPCAQRFKPDIILVSAGYDAHVLDPLANLQFTTATYYSLAKDIKRLAKEVCGGRCVFFLEGGYNLESLSSSVADSFRALLGEDSLASEFDNPAYLYDEPMRKVRDAIQRAKSIHCL.

The N-terminal 44 residues, 1–44 (MSMALIVRPFFVPGSAGISGSRNICKKNQWRKYLLKPSGSSINC), are a transit peptide targeting the chloroplast. A histone deacetylase region spans residues 62–392 (DARLIYSVSA…FRALLGEDSL (331 aa)). His-202 (proton donor/acceptor) is an active-site residue. Asp-239, His-241, and Asp-326 together coordinate Zn(2+).

This sequence belongs to the histone deacetylase family. As to quaternary structure, interacts with PP2A2. It depends on Zn(2+) as a cofactor. As to expression, expressed in stems, leaves, flowers, siliques and mature seeds.

Its subcellular location is the nucleus. It is found in the cytoplasm. The protein localises to the plastid. The protein resides in the chloroplast stroma. It localises to the mitochondrion. It catalyses the reaction N-acetylserotonin + H2O = serotonin + acetate. The enzyme catalyses N-acetyltyramine + H2O = tyramine + acetate. It carries out the reaction N-acetyltryptamine + H2O = tryptamine + acetate. The catalysed reaction is melatonin + H2O = 5-methoxytryptamine + acetate. Its activity is inhibited by trichostatin A (TSA), a known histone deacetylase inhibitor. Functionally, regulates lysine acetylation levels of plastid proteins related to photosynthesis. Involved in the regulation of the activation state of RuBisCO, which is controlled by lysine acetylation of RuBisCO activase under low-light conditions. Associates with alpha- and beta-tubulins and deacetylate alpha-tubulin. Does not seem to be required for the cellular patterning in the root epidermis. Involved in the regulation of melatonin biosynthesis by catalyzing the deacetylation of N-acetylserotonin to produce serotonin. N-acetylserotonin is methylated by acetylserotonin O-methyltransferase (ASMT) to produce melatonin (N-acetyl-5-methoxytryptamine). Deacetylates melatonin to produce 5-methoxytryptamine. In vitro, deacetylates N-acetyltyramine and N-acetyltryptamine to produce tyramine and tryptamine, respectively. This chain is Histone deacetylase 14, chloroplastic, found in Arabidopsis thaliana (Mouse-ear cress).